Consider the following 412-residue polypeptide: Zinc finger protein 821 (412 aa).

The segment at 26–83 is disordered; the sequence is RQAMMKTDFPGDLGSQRQAIQQLRDQDSSSSDSEGDEEETTQDEVSSHTSEEDGGVVK. Residues 58-67 are compositionally biased toward acidic residues; the sequence is SEGDEEETTQ. 2 consecutive C2H2-type zinc fingers follow at residues 116–140 and 150–172; these read ELCQ…VYQH and YMCP…LLIH. A coiled-coil region spans residues 257-366; it reads KWALRRQNEP…EKMDMMLRAQ (110 aa). The disordered stretch occupies residues 278-319; the sequence is RTAKKSRRDNETPEEREVRRMRDREAKRLQRMQETDEQRARR.

It belongs to the krueppel C2H2-type zinc-finger protein family.

The protein resides in the nucleus. Its function is as follows. May be involved in transcriptional regulation. The sequence is that of Zinc finger protein 821 (ZNF821) from Homo sapiens (Human).